Here is a 531-residue protein sequence, read N- to C-terminus: Tyrosine/DOPA decarboxylase 2 (531 aa).

An N6-(pyridoxal phosphate)lysine modification is found at Lys319.

It belongs to the group II decarboxylase family. Homodimer. Requires pyridoxal 5'-phosphate as cofactor. In terms of tissue distribution, predominantly expressed in the roots and stems, while a lower level expression is seen in the sepals and carpels of fully expanded flowers.

It catalyses the reaction L-tyrosine + H(+) = tyramine + CO2. The enzyme catalyses L-dopa + H(+) = dopamine + CO2. The catalysed reaction is 5-hydroxy-L-tryptophan + H(+) = serotonin + CO2. In terms of biological role, marginally higher substrate specificity for L-DOPA over L-tyrosine. This Papaver somniferum (Opium poppy) protein is Tyrosine/DOPA decarboxylase 2 (TYDC2).